We begin with the raw amino-acid sequence, 343 residues long: tRNA N6-adenosine threonylcarbamoyltransferase (343 aa).

Residues His115 and His119 each coordinate Fe cation. Substrate contacts are provided by residues Leu138–Ala142, Asp171, Gly184, and Asn276. Asp304 is a Fe cation binding site.

Belongs to the KAE1 / TsaD family. Fe(2+) is required as a cofactor.

It is found in the cytoplasm. The catalysed reaction is L-threonylcarbamoyladenylate + adenosine(37) in tRNA = N(6)-L-threonylcarbamoyladenosine(37) in tRNA + AMP + H(+). Functionally, required for the formation of a threonylcarbamoyl group on adenosine at position 37 (t(6)A37) in tRNAs that read codons beginning with adenine. Is involved in the transfer of the threonylcarbamoyl moiety of threonylcarbamoyl-AMP (TC-AMP) to the N6 group of A37, together with TsaE and TsaB. TsaD likely plays a direct catalytic role in this reaction. This Buchnera aphidicola subsp. Cinara cedri (strain Cc) protein is tRNA N6-adenosine threonylcarbamoyltransferase.